The chain runs to 211 residues: ATP phosphoribosyltransferase (211 aa).

It belongs to the ATP phosphoribosyltransferase family. Short subfamily. In terms of assembly, heteromultimer composed of HisG and HisZ subunits.

Its subcellular location is the cytoplasm. It carries out the reaction 1-(5-phospho-beta-D-ribosyl)-ATP + diphosphate = 5-phospho-alpha-D-ribose 1-diphosphate + ATP. Its pathway is amino-acid biosynthesis; L-histidine biosynthesis; L-histidine from 5-phospho-alpha-D-ribose 1-diphosphate: step 1/9. In terms of biological role, catalyzes the condensation of ATP and 5-phosphoribose 1-diphosphate to form N'-(5'-phosphoribosyl)-ATP (PR-ATP). Has a crucial role in the pathway because the rate of histidine biosynthesis seems to be controlled primarily by regulation of HisG enzymatic activity. This Pseudomonas putida (strain GB-1) protein is ATP phosphoribosyltransferase.